We begin with the raw amino-acid sequence, 413 residues long: Serine hydroxymethyltransferase (413 aa).

(6S)-5,6,7,8-tetrahydrofolate contacts are provided by residues Leu117 and 121-123 (GHL). Lys226 is modified (N6-(pyridoxal phosphate)lysine). Residues Glu239 and 349–351 (SPF) contribute to the (6S)-5,6,7,8-tetrahydrofolate site.

It belongs to the SHMT family. In terms of assembly, homodimer. The cofactor is pyridoxal 5'-phosphate.

The protein resides in the cytoplasm. It carries out the reaction (6R)-5,10-methylene-5,6,7,8-tetrahydrofolate + glycine + H2O = (6S)-5,6,7,8-tetrahydrofolate + L-serine. It participates in one-carbon metabolism; tetrahydrofolate interconversion. Its pathway is amino-acid biosynthesis; glycine biosynthesis; glycine from L-serine: step 1/1. Catalyzes the reversible interconversion of serine and glycine with tetrahydrofolate (THF) serving as the one-carbon carrier. This reaction serves as the major source of one-carbon groups required for the biosynthesis of purines, thymidylate, methionine, and other important biomolecules. Also exhibits THF-independent aldolase activity toward beta-hydroxyamino acids, producing glycine and aldehydes, via a retro-aldol mechanism. This Bacillus cereus (strain ATCC 10987 / NRS 248) protein is Serine hydroxymethyltransferase.